The sequence spans 224 residues: Protein GrpE (224 aa).

Residues 1–72 (MEKERDVAQE…KAKEEQNEEL (72 aa)) are disordered. Residues 10-19 (EQATYEQESP) show a composition bias toward polar residues. Residues 20–67 (NAERQEELKENEHQEKNAPEEQEKVREENGRQDAQKDEIGDPEKAKEE) show a composition bias toward basic and acidic residues.

This sequence belongs to the GrpE family. Homodimer.

It is found in the cytoplasm. In terms of biological role, participates actively in the response to hyperosmotic and heat shock by preventing the aggregation of stress-denatured proteins, in association with DnaK and GrpE. It is the nucleotide exchange factor for DnaK and may function as a thermosensor. Unfolded proteins bind initially to DnaJ; upon interaction with the DnaJ-bound protein, DnaK hydrolyzes its bound ATP, resulting in the formation of a stable complex. GrpE releases ADP from DnaK; ATP binding to DnaK triggers the release of the substrate protein, thus completing the reaction cycle. Several rounds of ATP-dependent interactions between DnaJ, DnaK and GrpE are required for fully efficient folding. The polypeptide is Protein GrpE (Parageobacillus thermoglucosidasius (Geobacillus thermoglucosidasius)).